Consider the following 218-residue polypeptide: Large ribosomal subunit protein eL14 (218 aa).

The residue at position 79 (Lys79) is an N6-acetyllysine. Position 85 is an N6-acetyllysine; alternate (Lys85). Lys85 is modified (N6-succinyllysine; alternate). A Glycyl lysine isopeptide (Lys-Gly) (interchain with G-Cter in SUMO2) cross-link involves residue Lys124. At Ser139 the chain carries Phosphoserine. Positions 159–218 (VPAKKATAAGKKAAAQKAPAQKAPAQKAAGQKAAQPPKAQKGQKPPAQKAPAPKASGKKA) are disordered. Repeat copies occupy residues 174-178 (QKAPA), 179-183 (QKAPA), 184-188 (QKAAG), 189-193 (QKAAQ), 196-198 (KAQ), and 199-201 (KGQ). The interval 174–193 (QKAPAQKAPAQKAAGQKAAQ) is 4 X 5 AA tandem repeats of Q-K-A-[PAS]-X. The tract at residues 196 to 201 (KAQKGQ) is 2 X 3 AA tandem repeats of K-[GA]-Q. At Lys207 the chain carries N6-succinyllysine.

Belongs to the eukaryotic ribosomal protein eL14 family. Component of the large ribosomal subunit.

It is found in the cytoplasm. Functionally, component of the large ribosomal subunit. The ribosome is a large ribonucleoprotein complex responsible for the synthesis of proteins in the cell. This is Large ribosomal subunit protein eL14 (RPL14) from Oryctolagus cuniculus (Rabbit).